Reading from the N-terminus, the 115-residue chain is Large ribosomal subunit protein bL20 (115 aa).

This sequence belongs to the bacterial ribosomal protein bL20 family.

Binds directly to 23S ribosomal RNA and is necessary for the in vitro assembly process of the 50S ribosomal subunit. It is not involved in the protein synthesizing functions of that subunit. This chain is Large ribosomal subunit protein bL20, found in Prochlorococcus marinus (strain NATL2A).